A 115-amino-acid chain; its full sequence is Large ribosomal subunit protein eL30 (115 aa).

A phosphoserine mark is found at Ser-10 and Ser-16. Position 26 is an N6-acetyllysine; alternate (Lys-26). Lys-26 participates in a covalent cross-link: Glycyl lysine isopeptide (Lys-Gly) (interchain with G-Cter in SUMO2); alternate.

The protein belongs to the eukaryotic ribosomal protein eL30 family. Component of the large ribosomal subunit.

Its subcellular location is the cytoplasm. Functionally, component of the large ribosomal subunit. The ribosome is a large ribonucleoprotein complex responsible for the synthesis of proteins in the cell. In Homo sapiens (Human), this protein is Large ribosomal subunit protein eL30 (RPL30).